A 481-amino-acid chain; its full sequence is Proline--tRNA ligase (481 aa).

It belongs to the class-II aminoacyl-tRNA synthetase family. ProS type 3 subfamily. In terms of assembly, homodimer.

It localises to the cytoplasm. The catalysed reaction is tRNA(Pro) + L-proline + ATP = L-prolyl-tRNA(Pro) + AMP + diphosphate. In terms of biological role, catalyzes the attachment of proline to tRNA(Pro) in a two-step reaction: proline is first activated by ATP to form Pro-AMP and then transferred to the acceptor end of tRNA(Pro). The sequence is that of Proline--tRNA ligase from Chlorobium phaeobacteroides (strain DSM 266 / SMG 266 / 2430).